A 161-amino-acid polypeptide reads, in one-letter code: Cysteine dioxygenase (161 aa).

3 residues coordinate Fe cation: H75, H77, and H125.

This sequence belongs to the cysteine dioxygenase family. Fe cation serves as cofactor.

It carries out the reaction L-cysteine + O2 = 3-sulfino-L-alanine + H(+). This is Cysteine dioxygenase (cdoA) from Bacillus subtilis (strain 168).